A 277-amino-acid chain; its full sequence is Small ribosomal subunit protein uS2 (277 aa).

The segment at 226–277 is disordered; that stretch reads GQQARADRGEDLGAAVEPVAEPALVEEAAAPVTEDEQVPAEAAAETERQSDA. Residues 239-257 show a composition bias toward low complexity; it reads AAVEPVAEPALVEEAAAPV.

This sequence belongs to the universal ribosomal protein uS2 family.

The chain is Small ribosomal subunit protein uS2 from Sphingopyxis alaskensis (strain DSM 13593 / LMG 18877 / RB2256) (Sphingomonas alaskensis).